The primary structure comprises 352 residues: C-C chemokine receptor type 5 (352 aa).

Residues Met1 to Ala30 lie on the Extracellular side of the membrane. Tyr3 carries the post-translational modification Sulfotyrosine. Residues Ser6 and Ser7 are each glycosylated (O-linked (GalNAc...) serine). Residues Tyr10, Tyr14, and Tyr15 each carry the sulfotyrosine modification. Intrachain disulfides connect Cys20–Cys269 and Cys101–Cys178. Residues Arg31–Cys58 traverse the membrane as a helical segment. Over Lys59–Tyr68 the chain is Cytoplasmic. A helical membrane pass occupies residues Leu69–Tyr89. Residues Ala90–Gln102 are Extracellular-facing. Residues Leu103–Ile124 traverse the membrane as a helical segment. At Asp125 to Thr141 the chain is on the cytoplasmic side. A helical transmembrane segment spans residues Val142–Phe166. The Extracellular segment spans residues Thr167–Ile198. Residues Val199 to Leu218 form a helical membrane-spanning segment. Over Lys219 to Arg235 the chain is Cytoplasmic. The chain crosses the membrane as a helical span at residues Leu236–Phe260. Over Gln261–Gln277 the chain is Extracellular. The chain crosses the membrane as a helical span at residues Ala278–Gly301. Topologically, residues Glu302–Leu352 are cytoplasmic. Residues Cys321, Cys323, and Cys324 are each lipidated (S-palmitoyl cysteine). Phosphoserine; by BARK1 is present on residues Ser336, Ser337, Ser342, and Ser349.

It belongs to the G-protein coupled receptor 1 family. In terms of assembly, interacts with PRAF2. Efficient ligand binding to CCL3/MIP-1alpha and CCL4/MIP-1beta requires sulfation, O-glycosylation and sialic acid modifications. Glycosylation on Ser-6 is required for efficient binding of CCL4. Interacts with GRK2. Interacts with ARRB1 and ARRB2. Interacts with CNIH4. Interacts with S100A4; this interaction stimulates T-lymphocyte chemotaxis. Post-translationally, sulfated on at least 2 of the N-terminal tyrosines. Sulfation is required for efficient binding of the chemokines, CCL3 and CCL4. In terms of processing, palmitoylation in the C-terminal is important for cell surface expression. Phosphorylation on serine residues in the C-terminal is stimulated by binding CC chemokines especially by APO-RANTES. Post-translationally, O-glycosylated, but not N-glycosylated. Ser-6 appears to be the major site even if Ser-7 may be also O-glycosylated. Also sialylated glycans present which contribute to chemokine binding. Thr-16 and Ser-17 may also be glycosylated and, if so, with small moieties such as a T-antigen.

The protein resides in the cell membrane. In terms of biological role, receptor for a number of inflammatory CC-chemokines including CCL3/MIP-1-alpha, CCL4/MIP-1-beta and RANTES and subsequently transduces a signal by increasing the intracellular calcium ion level. May play a role in the control of granulocytic lineage proliferation or differentiation. Participates in T-lymphocyte migration to the infection site by acting as a chemotactic receptor. This chain is C-C chemokine receptor type 5 (CCR5), found in Symphalangus syndactylus (Siamang).